Here is a 697-residue protein sequence, read N- to C-terminus: Potassium-transporting ATPase ATP-binding subunit (697 aa).

4 helical membrane-spanning segments follow: residues 55–75, 79–99, 245–265, and 271–291; these read PIMF…FLPS, SIPG…VLFA, LTLI…YLGF, and VLVA…LSAI. Asp324 serves as the catalytic 4-aspartylphosphate intermediate. Residues Asp361, Glu365, 393–400, and Lys412 contribute to the ATP site; that span reads FKAETRMS. Mg(2+)-binding residues include Asp535 and Asp539. The next 3 helical transmembrane spans lie at 605-625, 633-653, and 677-697; these read FAII…LNIM, AILS…PLAM, and GGVI…GLFI.

This sequence belongs to the cation transport ATPase (P-type) (TC 3.A.3) family. Type IA subfamily. In terms of assembly, the system is composed of three essential subunits: KdpA, KdpB and KdpC.

The protein localises to the cell membrane. The enzyme catalyses K(+)(out) + ATP + H2O = K(+)(in) + ADP + phosphate + H(+). Functionally, part of the high-affinity ATP-driven potassium transport (or Kdp) system, which catalyzes the hydrolysis of ATP coupled with the electrogenic transport of potassium into the cytoplasm. This subunit is responsible for energy coupling to the transport system and for the release of the potassium ions to the cytoplasm. This Bacillus cereus (strain ATCC 14579 / DSM 31 / CCUG 7414 / JCM 2152 / NBRC 15305 / NCIMB 9373 / NCTC 2599 / NRRL B-3711) protein is Potassium-transporting ATPase ATP-binding subunit.